A 417-amino-acid polypeptide reads, in one-letter code: Gamma-glutamyl phosphate reductase (417 aa).

Belongs to the gamma-glutamyl phosphate reductase family.

It is found in the cytoplasm. It catalyses the reaction L-glutamate 5-semialdehyde + phosphate + NADP(+) = L-glutamyl 5-phosphate + NADPH + H(+). The protein operates within amino-acid biosynthesis; L-proline biosynthesis; L-glutamate 5-semialdehyde from L-glutamate: step 2/2. Its function is as follows. Catalyzes the NADPH-dependent reduction of L-glutamate 5-phosphate into L-glutamate 5-semialdehyde and phosphate. The product spontaneously undergoes cyclization to form 1-pyrroline-5-carboxylate. In Streptococcus agalactiae serotype Ia (strain ATCC 27591 / A909 / CDC SS700), this protein is Gamma-glutamyl phosphate reductase.